The chain runs to 96 residues: MARLTILIAFVAALVLVVHTSAFRDEQSCKKQLQHSEKHQEDCFPRIKNVIGRSGSSGKKSEKLGQCCEILSDLSEGCQCRALQPVMEKYCYSEAK.

Residues 1–22 form the signal peptide; the sequence is MARLTILIAFVAALVLVVHTSA. 2 cysteine pairs are disulfide-bonded: C29/C78 and C80/C91.

Belongs to the 2S seed storage albumins family.

It is found in the endoplasmic reticulum. The protein is Conglutin delta 4 of Lupinus angustifolius (Narrow-leaved blue lupine).